The chain runs to 177 residues: O-acetyl-ADP-ribose deacetylase (177 aa).

One can recognise a Macro domain in the interval 1-175 (MKTRIHVVQG…LYERLLTQQG (175 aa)). Substrate-binding positions include 11-12 (DI), asparagine 25, 33-35 (GVD), and 122-126 (STGVY). The active-site Proton acceptor is aspartate 35.

Belongs to the MacroD-type family. YmdB subfamily. Homodimer. Interacts with RNase III.

The catalysed reaction is 3''-O-acetyl-ADP-D-ribose + H2O = ADP-D-ribose + acetate + H(+). It carries out the reaction 2''-O-acetyl-ADP-D-ribose + H2O = ADP-D-ribose + acetate + H(+). In terms of biological role, deacetylates O-acetyl-ADP ribose to yield ADP-ribose and free acetate. Down-regulates ribonuclease 3 (RNase III) activity. Acts by interacting directly with the region of the ribonuclease that is required for dimerization/activation. The polypeptide is O-acetyl-ADP-ribose deacetylase (Shigella dysenteriae serotype 1 (strain Sd197)).